A 433-amino-acid chain; its full sequence is Poly(A) ribonuclease POP2 (433 aa).

N-acetylmethionine is present on Met1. Residues Leu78–Pro98 form a disordered region. The segment covering Gln81–Gln91 has biased composition (low complexity). Thr97 carries the phosphothreonine; by YAK1 modification. Ser188, Glu190, Asp310, and Gln394 together coordinate a divalent metal cation.

Belongs to the CAF1 family. As to quaternary structure, subunit of the 1.0 MDa CCR4-NOT core complex that contains CCR4, CAF1, NOT1, NOT2, NOT3, NOT4, NOT5, CAF40 and CAF130. In the complex interacts with NOT1. The core complex probably is part of a less characterized 1.9 MDa CCR4-NOT complex. The cofactor is Mg(2+).

It is found in the cytoplasm. The protein localises to the nucleus. The enzyme catalyses Exonucleolytic cleavage of poly(A) to 5'-AMP.. In terms of biological role, acts as a probably catalytic component of the CCR4-NOT core complex, which in the nucleus seems to be a general transcription factor, and in the cytoplasm the major mRNA deadenylase involved in mRNA turnover. In vitro, POP2 has 3'-exoribonuclease activity with a preference for poly(A) RNAs, but also degrades poly(U) and poly(C) RNAs. Is part of a glucose-sensing system involved in growth control in response to glucose availability. This is Poly(A) ribonuclease POP2 (POP2) from Saccharomyces cerevisiae (strain ATCC 204508 / S288c) (Baker's yeast).